Here is a 315-residue protein sequence, read N- to C-terminus: BTB/POZ domain-containing adapter for CUL3-mediated RhoA degradation protein 3 (315 aa).

Methionine 1 carries the N-acetylmethionine modification. Serine 23 is subject to Phosphoserine. The BTB domain maps to 32–100 (KYVKLNVGGA…LRDGAVPLPE (69 aa)). An Interaction with PCNA motif is present at residues 239–245 (QTKVEFP). The disordered stretch occupies residues 269 to 294 (NALLEATGGAAGRSHHLDEDEERERE).

It belongs to the BACURD family. Homotetramer; forms a two-fold symmetric tetramer in solution. Interacts with CUL3; interaction is direct and forms a 5:5 heterodecamer. Component of the BCR(BACURD3) E3 ubiquitin ligase complex, at least composed of CUL3, KCTD10/BACURD3 and RBX1. Interacts with DNA polymerase delta subunit 2/POLD2. Interacts with PCNA. As to expression, expressed at highest levels in lung. Also detected in testis and heart. Very low expression, if any, in brain, liver, spleen, kidney and skeletal muscle.

The protein resides in the nucleus. It participates in protein modification; protein ubiquitination. Its function is as follows. Substrate-specific adapter of a BCR (BTB-CUL3-RBX1) E3 ubiquitin-protein ligase complex. The BCR(BACURD3) E3 ubiquitin ligase complex mediates the ubiquitination of target proteins, leading to their degradation by the proteasome. The polypeptide is BTB/POZ domain-containing adapter for CUL3-mediated RhoA degradation protein 3 (Kctd10) (Rattus norvegicus (Rat)).